The chain runs to 298 residues: Small ribosomal subunit protein uS2 (298 aa).

A disordered region spans residues 272 to 298 (EGGDWAASSAAPAGESWAEAQPTEAKW).

Belongs to the universal ribosomal protein uS2 family. Component of the small ribosomal subunit. Mature ribosomes consist of a small (40S) and a large (60S) subunit. The 40S subunit contains about 33 different proteins and 1 molecule of RNA (18S). The 60S subunit contains about 49 different proteins and 3 molecules of RNA (25S, 5.8S and 5S). Interacts with rps21.

The protein resides in the cytoplasm. Its function is as follows. Required for the assembly and/or stability of the 40S ribosomal subunit. Required for the processing of the 20S rRNA-precursor to mature 18S rRNA in a late step of the maturation of 40S ribosomal subunits. The protein is Small ribosomal subunit protein uS2 (rps0) of Aspergillus niger (strain ATCC MYA-4892 / CBS 513.88 / FGSC A1513).